Here is a 282-residue protein sequence, read N- to C-terminus: Sulfur carrier protein FdhD (282 aa).

Cysteine 115 functions as the Cysteine persulfide intermediate in the catalytic mechanism.

Belongs to the FdhD family.

The protein resides in the cytoplasm. In terms of biological role, required for formate dehydrogenase (FDH) activity. Acts as a sulfur carrier protein that transfers sulfur from IscS to the molybdenum cofactor prior to its insertion into FDH. This chain is Sulfur carrier protein FdhD, found in Streptomyces avermitilis (strain ATCC 31267 / DSM 46492 / JCM 5070 / NBRC 14893 / NCIMB 12804 / NRRL 8165 / MA-4680).